A 904-amino-acid polypeptide reads, in one-letter code: Alanine--tRNA ligase (904 aa).

Residues His584, His588, Cys687, and His691 each coordinate Zn(2+).

Belongs to the class-II aminoacyl-tRNA synthetase family. The cofactor is Zn(2+).

It is found in the cytoplasm. The enzyme catalyses tRNA(Ala) + L-alanine + ATP = L-alanyl-tRNA(Ala) + AMP + diphosphate. Functionally, catalyzes the attachment of alanine to tRNA(Ala) in a two-step reaction: alanine is first activated by ATP to form Ala-AMP and then transferred to the acceptor end of tRNA(Ala). Also edits incorrectly charged Ser-tRNA(Ala) and Gly-tRNA(Ala) via its editing domain. This is Alanine--tRNA ligase from Mycobacterium tuberculosis (strain ATCC 25177 / H37Ra).